Reading from the N-terminus, the 352-residue chain is Replication factor C subunit 5 (352 aa).

It belongs to the activator 1 small subunits family. In terms of assembly, heteropentamer of subunits rfc1, rfc2, rfc3, rfc4 and rfc5 that forms a complex with PCNA in the presence of ATP.

Its subcellular location is the nucleus. Its function is as follows. The elongation of primed DNA templates by DNA polymerase delta and epsilon requires the action of the accessory proteins proliferating cell nuclear antigen (PCNA) and activator 1. The polypeptide is Replication factor C subunit 5 (Neurospora crassa (strain ATCC 24698 / 74-OR23-1A / CBS 708.71 / DSM 1257 / FGSC 987)).